Consider the following 197-residue polypeptide: Glycerol-3-phosphate acyltransferase (197 aa).

5 helical membrane passes run 2–22 (LDVILVIIGYLIGSISSAIVV), 53–73 (AGITLLGDWLKGTLPVLLAWL), 78–98 (PVVASAAGLAAFFGHLFPVYF), 112–132 (VILAWSPLALLATVVTWLAVA), and 152–174 (YMLWLSASPVLTAATAILTAAIV).

Belongs to the PlsY family. In terms of assembly, probably interacts with PlsX.

It localises to the cell inner membrane. It carries out the reaction an acyl phosphate + sn-glycerol 3-phosphate = a 1-acyl-sn-glycero-3-phosphate + phosphate. It participates in lipid metabolism; phospholipid metabolism. Functionally, catalyzes the transfer of an acyl group from acyl-phosphate (acyl-PO(4)) to glycerol-3-phosphate (G3P) to form lysophosphatidic acid (LPA). This enzyme utilizes acyl-phosphate as fatty acyl donor, but not acyl-CoA or acyl-ACP. This Halorhodospira halophila (strain DSM 244 / SL1) (Ectothiorhodospira halophila (strain DSM 244 / SL1)) protein is Glycerol-3-phosphate acyltransferase.